The chain runs to 577 residues: Urease subunit alpha (577 aa).

One can recognise a Urease domain in the interval 136 to 577 (GTVDCHVHLI…LPMTQRYFLF (442 aa)). Ni(2+) is bound by residues His141, His143, and Lys224. Lys224 is subject to N6-carboxylysine. Substrate is bound at residue His226. Residues His253 and His279 each coordinate Ni(2+). Residue His327 is the Proton donor of the active site. Asp367 provides a ligand contact to Ni(2+).

Belongs to the metallo-dependent hydrolases superfamily. Urease alpha subunit family. Heterotrimer of UreA (gamma), UreB (beta) and UreC (alpha) subunits. Three heterotrimers associate to form the active enzyme. Requires Ni cation as cofactor. Carboxylation allows a single lysine to coordinate two nickel ions.

It localises to the cytoplasm. It carries out the reaction urea + 2 H2O + H(+) = hydrogencarbonate + 2 NH4(+). It functions in the pathway nitrogen metabolism; urea degradation; CO(2) and NH(3) from urea (urease route): step 1/1. This Mycobacterium bovis (strain ATCC BAA-935 / AF2122/97) protein is Urease subunit alpha.